A 720-amino-acid polypeptide reads, in one-letter code: Engulfment and cell motility protein 3 (720 aa).

The ELMO domain maps to 307–479 (EQREQLQALR…VVREQLARTL (173 aa)). In terms of domain architecture, PH spans 541–663 (LRLCEGMLFR…WTDGLSALLG (123 aa)).

Probably interacts directly with the SH3-domain of DOCK1 via its SH3-binding site. Part of a complex with DOCK1 and RAC1. Interacts with ADGRB3.

It is found in the cytoplasm. Involved in cytoskeletal rearrangements required for phagocytosis of apoptotic cells and cell motility. Acts in association with DOCK1 and CRK. Was initially proposed to be required in complex with DOCK1 to activate Rac Rho small GTPases. May enhance the guanine nucleotide exchange factor (GEF) activity of DOCK1. The polypeptide is Engulfment and cell motility protein 3 (Elmo3) (Rattus norvegicus (Rat)).